Here is a 145-residue protein sequence, read N- to C-terminus: D-aminoacyl-tRNA deacylase (145 aa).

The short motif at 137-138 (GP) is the Gly-cisPro motif, important for rejection of L-amino acids element.

It belongs to the DTD family. In terms of assembly, homodimer.

The protein resides in the cytoplasm. The catalysed reaction is glycyl-tRNA(Ala) + H2O = tRNA(Ala) + glycine + H(+). The enzyme catalyses a D-aminoacyl-tRNA + H2O = a tRNA + a D-alpha-amino acid + H(+). Its function is as follows. An aminoacyl-tRNA editing enzyme that deacylates mischarged D-aminoacyl-tRNAs. Also deacylates mischarged glycyl-tRNA(Ala), protecting cells against glycine mischarging by AlaRS. Acts via tRNA-based rather than protein-based catalysis; rejects L-amino acids rather than detecting D-amino acids in the active site. By recycling D-aminoacyl-tRNA to D-amino acids and free tRNA molecules, this enzyme counteracts the toxicity associated with the formation of D-aminoacyl-tRNA entities in vivo and helps enforce protein L-homochirality. The polypeptide is D-aminoacyl-tRNA deacylase (Francisella tularensis subsp. holarctica (strain LVS)).